The chain runs to 86 residues: DNA-directed RNA polymerase subunit omega (86 aa).

This sequence belongs to the RNA polymerase subunit omega family. In terms of assembly, the RNAP catalytic core consists of 2 alpha, 1 beta, 1 beta' and 1 omega subunit. When a sigma factor is associated with the core the holoenzyme is formed, which can initiate transcription.

The enzyme catalyses RNA(n) + a ribonucleoside 5'-triphosphate = RNA(n+1) + diphosphate. Functionally, promotes RNA polymerase assembly. Latches the N- and C-terminal regions of the beta' subunit thereby facilitating its interaction with the beta and alpha subunits. In Psychrobacter arcticus (strain DSM 17307 / VKM B-2377 / 273-4), this protein is DNA-directed RNA polymerase subunit omega.